Consider the following 1094-residue polypeptide: Centrosomal protein of 128 kDa (1094 aa).

The segment at 1-29 is disordered; sequence MAESSSESDHFRCRDRLSPWAARSTHRGT. Residues 7–17 are compositionally biased toward basic and acidic residues; that stretch reads ESDHFRCRDRL. At Ser31 the chain carries Phosphoserine. Residues 115–140 form a disordered region; the sequence is DGGTGSELHHFPPTSPLKDYGDPQGI. Coiled-coil stretches lie at residues 190-827 and 879-959; these read SRSD…QESI and EELK…IALE. Ser249, Ser291, and Ser331 each carry phosphoserine. Positions 319 to 345 are disordered; that stretch reads AEGDRKGLQHQVSQISKQQSNYQDEQG. Polar residues predominate over residues 328-342; sequence HQVSQISKQQSNYQD. Over residues 987–999 the composition is skewed to basic and acidic residues; that stretch reads DSCSSSERTDGRY. The disordered stretch occupies residues 987 to 1018; it reads DSCSSSERTDGRYSKYRVRRNSLQHHQDDTKY. Basic residues predominate over residues 1000–1009; sequence SKYRVRRNSL. Ser1061 carries the phosphoserine modification. Positions 1067-1094 are disordered; that stretch reads VAPDSASNKEDATMNGTSSQPKKEEYGS.

The protein localises to the cytoplasm. The protein resides in the cytoskeleton. It is found in the microtubule organizing center. Its subcellular location is the centrosome. It localises to the centriole. The protein localises to the spindle pole. In Homo sapiens (Human), this protein is Centrosomal protein of 128 kDa (CEP128).